The primary structure comprises 77 residues: Translation initiation factor IF-1, chloroplastic (77 aa).

Residues 1 to 71 (MKEQKLIHEG…TKGRIIYRLR (71 aa)) enclose the S1-like domain.

It belongs to the IF-1 family. As to quaternary structure, component of the 30S ribosomal translation pre-initiation complex which assembles on the 30S ribosome in the order IF-2 and IF-3, IF-1 and N-formylmethionyl-tRNA(fMet); mRNA recruitment can occur at any time during PIC assembly.

It localises to the plastid. The protein localises to the chloroplast. Functionally, one of the essential components for the initiation of protein synthesis. Stabilizes the binding of IF-2 and IF-3 on the 30S subunit to which N-formylmethionyl-tRNA(fMet) subsequently binds. Helps modulate mRNA selection, yielding the 30S pre-initiation complex (PIC). Upon addition of the 50S ribosomal subunit IF-1, IF-2 and IF-3 are released leaving the mature 70S translation initiation complex. The protein is Translation initiation factor IF-1, chloroplastic of Drimys granadensis.